The following is a 1057-amino-acid chain: Carbamoyl phosphate synthase large chain (1057 aa).

Residues 1–401 (MPKRNDIKTI…SLLKAIRSLE (401 aa)) form a carboxyphosphate synthetic domain region. Positions 129, 169, 175, 176, 208, 210, 215, 241, 242, 243, 284, and 298 each coordinate ATP. An ATP-grasp 1 domain is found at 133–327 (RTLMNYLNVP…IAKLAAKIAV (195 aa)). Mg(2+) contacts are provided by Gln284, Glu298, and Asn300. The Mn(2+) site is built by Gln284, Glu298, and Asn300. Residues 402–546 (YGVHHLGLPN…YGTYETENES (145 aa)) form an oligomerization domain region. A carbamoyl phosphate synthetic domain region spans residues 547–929 (IITDKEKILV…ALFKGLTGSG (383 aa)). The 191-residue stretch at 671–861 (EALLRKINVP…MAQLAMRAII (191 aa)) folds into the ATP-grasp 2 domain. ATP contacts are provided by Arg707, Arg746, Leu748, Glu752, Gly777, Val778, His779, Ser780, Gln820, and Glu832. Mg(2+) is bound by residues Gln820, Glu832, and Asn834. Mn(2+) is bound by residues Gln820, Glu832, and Asn834. Positions 930–1057 (VEVKDHGTVL…ESMTFTMRQM (128 aa)) constitute an MGS-like domain. An allosteric domain region spans residues 930–1057 (VEVKDHGTVL…ESMTFTMRQM (128 aa)).

The protein belongs to the CarB family. As to quaternary structure, composed of two chains; the small (or glutamine) chain promotes the hydrolysis of glutamine to ammonia, which is used by the large (or ammonia) chain to synthesize carbamoyl phosphate. Tetramer of heterodimers (alpha,beta)4. Mg(2+) serves as cofactor. Mn(2+) is required as a cofactor.

It carries out the reaction hydrogencarbonate + L-glutamine + 2 ATP + H2O = carbamoyl phosphate + L-glutamate + 2 ADP + phosphate + 2 H(+). The enzyme catalyses hydrogencarbonate + NH4(+) + 2 ATP = carbamoyl phosphate + 2 ADP + phosphate + 2 H(+). It participates in amino-acid biosynthesis; L-arginine biosynthesis; carbamoyl phosphate from bicarbonate: step 1/1. The protein operates within pyrimidine metabolism; UMP biosynthesis via de novo pathway; (S)-dihydroorotate from bicarbonate: step 1/3. Large subunit of the glutamine-dependent carbamoyl phosphate synthetase (CPSase). CPSase catalyzes the formation of carbamoyl phosphate from the ammonia moiety of glutamine, carbonate, and phosphate donated by ATP, constituting the first step of 2 biosynthetic pathways, one leading to arginine and/or urea and the other to pyrimidine nucleotides. The large subunit (synthetase) binds the substrates ammonia (free or transferred from glutamine from the small subunit), hydrogencarbonate and ATP and carries out an ATP-coupled ligase reaction, activating hydrogencarbonate by forming carboxy phosphate which reacts with ammonia to form carbamoyl phosphate. This chain is Carbamoyl phosphate synthase large chain, found in Staphylococcus aureus (strain bovine RF122 / ET3-1).